Consider the following 234-residue polypeptide: Phosphoglycolate phosphatase (234 aa).

Asp-15 functions as the Nucleophile in the catalytic mechanism. Residues Asp-15, Asp-17, and Asp-177 each coordinate Mg(2+).

Belongs to the HAD-like hydrolase superfamily. CbbY/CbbZ/Gph/YieH family. Monomer. Mg(2+) is required as a cofactor. Requires chloride as cofactor.

The catalysed reaction is 2-phosphoglycolate + H2O = glycolate + phosphate. It functions in the pathway organic acid metabolism; glycolate biosynthesis; glycolate from 2-phosphoglycolate: step 1/1. Functionally, specifically catalyzes the dephosphorylation of 2-phosphoglycolate. Is involved in the dissimilation of the intracellular 2-phosphoglycolate formed during the DNA repair of 3'-phosphoglycolate ends, a major class of DNA lesions induced by oxidative stress. In Photorhabdus laumondii subsp. laumondii (strain DSM 15139 / CIP 105565 / TT01) (Photorhabdus luminescens subsp. laumondii), this protein is Phosphoglycolate phosphatase.